Here is a 64-residue protein sequence, read N- to C-terminus: Alpha-conotoxin CnIC (64 aa).

The first 21 residues, 1–21, serve as a signal peptide directing secretion; the sequence is MGMRMMFTVFLLVVLTTTVVS. Positions 22–47 are excised as a propeptide; sequence FPSDSASDVRDDEAKDERSDMYKSKR. N48 is modified (deamidated asparagine; in CnIH; partial). Intrachain disulfides connect C51–C56 and C52–C62. C62 is subject to Cysteine amide.

Belongs to the conotoxin A superfamily. As to expression, expressed by the venom duct.

The protein resides in the secreted. In terms of biological role, alpha-conotoxins act on postsynaptic membranes, they bind to the nicotinic acetylcholine receptors (nAChR) and thus inhibit them. This is Alpha-conotoxin CnIC from Conus consors (Singed cone).